Reading from the N-terminus, the 365-residue chain is 3-dehydroquinate synthase (365 aa).

NAD(+) is bound by residues 107 to 111, 131 to 132, Lys144, and Lys153; these read GVIGD and TS. Zn(2+) contacts are provided by Glu186, His251, and His268.

This sequence belongs to the sugar phosphate cyclases superfamily. Dehydroquinate synthase family. Co(2+) is required as a cofactor. The cofactor is Zn(2+). Requires NAD(+) as cofactor.

It is found in the cytoplasm. It catalyses the reaction 7-phospho-2-dehydro-3-deoxy-D-arabino-heptonate = 3-dehydroquinate + phosphate. The protein operates within metabolic intermediate biosynthesis; chorismate biosynthesis; chorismate from D-erythrose 4-phosphate and phosphoenolpyruvate: step 2/7. In terms of biological role, catalyzes the conversion of 3-deoxy-D-arabino-heptulosonate 7-phosphate (DAHP) to dehydroquinate (DHQ). This is 3-dehydroquinate synthase from Crocosphaera subtropica (strain ATCC 51142 / BH68) (Cyanothece sp. (strain ATCC 51142)).